Reading from the N-terminus, the 492-residue chain is Glycylpeptide N-tetradecanoyltransferase (492 aa).

A compositionally biased stretch (basic and acidic residues) spans 1–22 (MSDSKDRKGKAPEGQSSEKKDG). Residues 1–45 (MSDSKDRKGKAPEGQSSEKKDGAVNITPQMAESLLENNPALRNET) are disordered. Tetradecanoyl-CoA is bound by residues 82 to 85 (YKFW), 215 to 217 (LCI), and 223 to 227 (SKRLT). Leucine 492 (proton acceptor; via carboxylate) is an active-site residue.

This sequence belongs to the NMT family. Monomer.

It localises to the cytoplasm. The enzyme catalyses N-terminal glycyl-[protein] + tetradecanoyl-CoA = N-tetradecanoylglycyl-[protein] + CoA + H(+). Functionally, adds a myristoyl group to the N-terminal glycine residue of certain cellular proteins. This chain is Glycylpeptide N-tetradecanoyltransferase (nmt1), found in Aspergillus fumigatus (strain ATCC MYA-4609 / CBS 101355 / FGSC A1100 / Af293) (Neosartorya fumigata).